The following is a 94-amino-acid chain: ESAT-6-like protein EsxI (94 aa).

It belongs to the WXG100 family. ESAT-6 subfamily.

The protein localises to the secreted. The polypeptide is ESAT-6-like protein EsxI (Mycobacterium bovis (strain ATCC BAA-935 / AF2122/97)).